Reading from the N-terminus, the 148-residue chain is Small ribosomal subunit protein bS6 (148 aa).

Residues 96–148 form a disordered region; that stretch reads HEEGQSAMLTRRDDRRERDGDDRPRRREGGFDRGDRGDRGPRRPRDTEAGEGA.

It belongs to the bacterial ribosomal protein bS6 family.

Functionally, binds together with bS18 to 16S ribosomal RNA. The chain is Small ribosomal subunit protein bS6 from Brucella canis (strain ATCC 23365 / NCTC 10854 / RM-666).